The chain runs to 255 residues: uncharacterized protein (255 aa).

Transmembrane regions (helical) follow at residues Ile-99 to Phe-119 and Tyr-146 to Leu-166.

The protein resides in the mitochondrion membrane. This is an uncharacterized protein from Schizosaccharomyces pombe (strain 972 / ATCC 24843) (Fission yeast).